The chain runs to 422 residues: Tyrosine--tRNA ligase 1 (422 aa).

An L-tyrosine-binding site is contributed by Y36. Positions 41–50 match the 'HIGH' region motif; the sequence is PTAGSLHIGH. Y173 and Q177 together coordinate L-tyrosine. A 'KMSKS' region motif is present at residues 233 to 237; the sequence is KFGKT. K236 serves as a coordination point for ATP. The 65-residue stretch at 355–419 folds into the S4 RNA-binding domain; sequence SDVVTLLLET…GKKQFAMVKL (65 aa).

It belongs to the class-I aminoacyl-tRNA synthetase family. TyrS type 1 subfamily. In terms of assembly, homodimer.

Its subcellular location is the cytoplasm. The enzyme catalyses tRNA(Tyr) + L-tyrosine + ATP = L-tyrosyl-tRNA(Tyr) + AMP + diphosphate + H(+). In terms of biological role, catalyzes the attachment of tyrosine to tRNA(Tyr) in a two-step reaction: tyrosine is first activated by ATP to form Tyr-AMP and then transferred to the acceptor end of tRNA(Tyr). The protein is Tyrosine--tRNA ligase 1 of Vibrio vulnificus (strain CMCP6).